The primary structure comprises 662 residues: DNA topoisomerase 4 subunit B (662 aa).

ATP-binding positions include tyrosine 20, asparagine 60, aspartate 87, 129 to 135 (GLHGVGI), and lysine 359. The Toprim domain maps to 439–553 (TELFIVEGDS…EGHLYLAKPP (115 aa)). Mg(2+) is bound by residues glutamate 445, aspartate 518, and aspartate 520.

It belongs to the type II topoisomerase family. ParE type 1 subfamily. As to quaternary structure, heterotetramer composed of ParC and ParE. It depends on Mg(2+) as a cofactor. The cofactor is Mn(2+). Requires Ca(2+) as cofactor.

The enzyme catalyses ATP-dependent breakage, passage and rejoining of double-stranded DNA.. Topoisomerase IV is essential for chromosome segregation. It relaxes supercoiled DNA. Performs the decatenation events required during the replication of a circular DNA molecule. The polypeptide is DNA topoisomerase 4 subunit B (Rickettsia prowazekii (strain Madrid E)).